A 20-amino-acid polypeptide reads, in one-letter code: Astacin-like peptidase p18 (20 aa).

Positions 1–20 (NAIPGNYYRWPYAKVPYVID) constitute a Peptidase M12A domain.

Requires Zn(2+) as cofactor.

In terms of biological role, active against casein. Has a role as a digestive enzyme. This chain is Astacin-like peptidase p18, found in Argiope aurantia (Black-and-yellow garden spider).